Reading from the N-terminus, the 320-residue chain is Glucokinase (320 aa).

12-17 lines the ATP pocket; that stretch reads GDIGGT.

This sequence belongs to the bacterial glucokinase family.

The protein resides in the cytoplasm. The catalysed reaction is D-glucose + ATP = D-glucose 6-phosphate + ADP + H(+). The chain is Glucokinase from Nitrobacter hamburgensis (strain DSM 10229 / NCIMB 13809 / X14).